We begin with the raw amino-acid sequence, 210 residues long: LexA repressor (210 aa).

A DNA-binding region (H-T-H motif) is located at residues 31–51; sequence RAEISRELGFRSPNAAEEHLK. Active-site for autocatalytic cleavage activity residues include Ser126 and Lys163.

Belongs to the peptidase S24 family. As to quaternary structure, homodimer.

The catalysed reaction is Hydrolysis of Ala-|-Gly bond in repressor LexA.. Represses a number of genes involved in the response to DNA damage (SOS response), including recA and lexA. In the presence of single-stranded DNA, RecA interacts with LexA causing an autocatalytic cleavage which disrupts the DNA-binding part of LexA, leading to derepression of the SOS regulon and eventually DNA repair. This is LexA repressor from Actinobacillus succinogenes (strain ATCC 55618 / DSM 22257 / CCUG 43843 / 130Z).